The primary structure comprises 571 residues: Proline--tRNA ligase (571 aa).

It belongs to the class-II aminoacyl-tRNA synthetase family. ProS type 1 subfamily. In terms of assembly, homodimer.

It is found in the cytoplasm. The catalysed reaction is tRNA(Pro) + L-proline + ATP = L-prolyl-tRNA(Pro) + AMP + diphosphate. In terms of biological role, catalyzes the attachment of proline to tRNA(Pro) in a two-step reaction: proline is first activated by ATP to form Pro-AMP and then transferred to the acceptor end of tRNA(Pro). As ProRS can inadvertently accommodate and process non-cognate amino acids such as alanine and cysteine, to avoid such errors it has two additional distinct editing activities against alanine. One activity is designated as 'pretransfer' editing and involves the tRNA(Pro)-independent hydrolysis of activated Ala-AMP. The other activity is designated 'posttransfer' editing and involves deacylation of mischarged Ala-tRNA(Pro). The misacylated Cys-tRNA(Pro) is not edited by ProRS. The protein is Proline--tRNA ligase of Actinobacillus pleuropneumoniae serotype 7 (strain AP76).